The following is a 116-amino-acid chain: MTDQADTAMPIQFTDAAAAKVKGLLEEEQNPALKLRVYVTGGGCSGFQYGFTFDEKVNDGDFTIEKQGVLLVVDPMSLQYLVGGEVDYTSGLEGSRFFVKNPNATTTCGCGASFSV.

Positions 44, 108, and 110 each coordinate iron-sulfur cluster.

This sequence belongs to the HesB/IscA family. As to quaternary structure, homodimer. Requires iron-sulfur cluster as cofactor.

Required for insertion of 4Fe-4S clusters for at least IspG. The chain is Iron-sulfur cluster insertion protein ErpA from Shewanella baltica (strain OS223).